The sequence spans 87 residues: MLFIDLEFFEYFLAFYPYNREYQNFFWEVCNMILFIIIALCGYLLFSFSKDNRRKPQKTSPLPAAAPHHNNLIDLDAIRQKRRMHLS.

The helical transmembrane segment at 25-47 threads the bilayer; that stretch reads FFWEVCNMILFIIIALCGYLLFS.

It is found in the membrane. This is an uncharacterized protein from Bacillus subtilis (strain 168).